We begin with the raw amino-acid sequence, 348 residues long: GMP reductase 2 (348 aa).

Residues Ser-26–Arg-27, Lys-78, Asp-129–Ala-131, and Ile-180–Gly-181 contribute to the NADP(+) site. K(+) contacts are provided by Gly-181, Gly-183, and Cys-186. Catalysis depends on Cys-186, which acts as the Thioimidate intermediate. The Proton donor/acceptor role is filled by Thr-188. Arg-189 provides a ligand contact to K(+). Residues Asp-219–Gly-221, Gly-242–Gly-243, Gly-268–Ser-270, and Arg-286–Gly-290 each bind GMP. NADP(+)-binding positions include Met-269 and Tyr-285 to Arg-286. The residue at position 291 (Lys-291) is an N6-acetyllysine. Ser-314–Thr-317 provides a ligand contact to NADP(+).

It belongs to the IMPDH/GMPR family. GuaC type 1 subfamily. Homotetramer.

It carries out the reaction IMP + NH4(+) + NADP(+) = GMP + NADPH + 2 H(+). Catalyzes the irreversible NADPH-dependent deamination of GMP to IMP. It functions in the conversion of nucleobase, nucleoside and nucleotide derivatives of G to A nucleotides, and in maintaining the intracellular balance of A and G nucleotides. Plays a role in modulating cellular differentiation. This Bos taurus (Bovine) protein is GMP reductase 2.